The following is a 337-amino-acid chain: G-protein coupled receptor 26 (337 aa).

Topologically, residues 1–10 (MNSWDAGLAG) are extracellular. The helical transmembrane segment at 11–31 (LLVGTIGVSLLSNGLVLLCLL) threads the bilayer. Topologically, residues 32-47 (HSADIRRQAPALFTLN) are cytoplasmic. Residues 48-68 (LTCGNLLCTVVNMPLTLAGVV) form a helical membrane-spanning segment. The Extracellular portion of the chain corresponds to 69 to 81 (AQRQPAGDRLCRL). An intrachain disulfide couples cysteine 79 to cysteine 156. The chain crosses the membrane as a helical span at residues 82 to 102 (AAFLDTFLAANSMLSMAALSI). Residues 103–123 (DRWVAVVFPLSYRAKMRLRDA) lie on the Cytoplasmic side of the membrane. The helical transmembrane segment at 124–144 (AFMVAYTWLHALTFPATALAL) threads the bilayer. At 145-168 (SWLGFHQLYASCTLCSRRPDERLR) the chain is on the extracellular side. Residues 169-189 (FAVFTSAFHALSFLLSFIVLC) traverse the membrane as a helical segment. Residues 190–245 (FTYLKVLKVARFHCKRIDVITMQTLVLLVDIHPSVRERCLEEQKRRRQRATKKIST) are Cytoplasmic-facing. A helical transmembrane segment spans residues 246–266 (FIGTFLVCFAPYVITRLVELF). The Extracellular segment spans residues 267 to 276 (STAPIGSHWG). The chain crosses the membrane as a helical span at residues 277–297 (VLSKCLAYSKAASDPFVYSLL). Over 298–337 (RHQYRRSCKELLNRIFNRRSLHSVGLTGDSHSQNILPVSE) the chain is Cytoplasmic.

The protein belongs to the G-protein coupled receptor 1 family. Exclusively expressed in the brain. Prominent expression is detected throughout the entire neocortex at all rostrocaudal and dorsoventral levels. Strong expression is detected in olfactory and auditory sensory areas.

It is found in the cell membrane. In terms of biological role, orphan receptor. Displays a significant level of constitutive activity. Its effect is mediated by G(s)-alpha protein that stimulate adenylate cyclase, resulting in an elevation of intracellular cAMP. The protein is G-protein coupled receptor 26 (Gpr26) of Mus musculus (Mouse).